Reading from the N-terminus, the 676-residue chain is Multisubstrate pseudouridine synthase 7 (676 aa).

Disordered regions lie at residues 1-27 and 87-110; these read MSDSSEATVKRPLDAHVGPSENAAKKL and KMPKKPQRSKEEVNAEKESEAARR. Ser-2 carries the post-translational modification N-acetylserine. The segment covering 94–110 has biased composition (basic and acidic residues); that stretch reads RSKEEVNAEKESEAARR. Asp-256 acts as the Nucleophile in catalysis. The 245-residue stretch at 338–582 folds into the TRUD domain; the sequence is GFINYFGMQR…AGSYRTVIQK (245 aa).

This sequence belongs to the pseudouridine synthase TruD family.

The protein resides in the nucleus. It localises to the cytoplasm. The catalysed reaction is uridine in 5S rRNA = pseudouridine in 5S rRNA. The enzyme catalyses uridine in snRNA = pseudouridine in snRNA. It catalyses the reaction uridine(13) in tRNA = pseudouridine(13) in tRNA. It carries out the reaction a uridine in mRNA = a pseudouridine in mRNA. In terms of biological role, catalyzes pseudouridylation at position 35 in U2 snRNA stem-loop II region which induces particular conformation of the mRNA-U2 snRNA duplex and places the nucleophile in an accessible position for the first step of splicing. Also catalyzes pseudouridylation at position 56 in U2 snRNA. Also catalyzes pseudouridylation at position 50 in 5S rRNA, position 13 in cytoplasmic tRNAs, and position 35 in pre-tRNA(Tyr). Pseudouridine residues in tRNAs may stabilize the local RNA conformation, favor interactions with protein partners and play an important role in the stabilization of the codon-anticodon interaction with mRNA. Also catalyzes pseudouridylation of mRNAs in response to heat shock: mediates pseudouridylation of mRNAs with the consensus sequence 5'-UGUAR-3'. The protein is Multisubstrate pseudouridine synthase 7 of Saccharomyces cerevisiae (strain ATCC 204508 / S288c) (Baker's yeast).